Here is a 353-residue protein sequence, read N- to C-terminus: Protein MGF 360-11L (353 aa).

The protein belongs to the asfivirus MGF 360 family. In terms of assembly, interacts with host TBK1 ad IRF7.

In terms of biological role, plays a role in virus cell tropism, and may be required for efficient virus replication in macrophages. In addition, inhibits the phosphorylation of host TBK1 and IRF7 and thereby negatively regulates the host cGAS signaling pathway and antagonizes IFN-mediated antiviral activity. The polypeptide is Protein MGF 360-11L (Ornithodoros (relapsing fever ticks)).